We begin with the raw amino-acid sequence, 325 residues long: MPKTERRTFLLDFEKPLSELESRIHQIRDLAAENNVDVSEQIQQLEARADQLREEIFSTLTPAQRLQLARHPRRPSTLDYVQMMADEWFELHGDRGGSDDPALIGGVARFDGQPVMMLGHQKGRDTKDNVARNFGMPAPGGYRKAMRLMDHANRFGMPILTFIDTPGAWAGLEAEKLGQGEAIAFNLREMFSLDVPIICTVIGEGGSGGALGIGVGDRVLMLKNSVYTVATPEACAAILWKDAGKSEQAAAALKITAEDLKSLEIIDEIVPEPASCAHADPIGAAQLLKAAIQDNLQALLKLTPERRRELRYQRFRKIGVFLESS.

The CoA carboxyltransferase C-terminal domain occupies 44-298; that stretch reads QLEARADQLR…KAAIQDNLQA (255 aa).

Belongs to the AccA family. As to quaternary structure, acetyl-CoA carboxylase is a heterohexamer composed of biotin carboxyl carrier protein (AccB), biotin carboxylase (AccC) and two subunits each of ACCase subunit alpha (AccA) and ACCase subunit beta (AccD).

The protein localises to the cytoplasm. The enzyme catalyses N(6)-carboxybiotinyl-L-lysyl-[protein] + acetyl-CoA = N(6)-biotinyl-L-lysyl-[protein] + malonyl-CoA. It functions in the pathway lipid metabolism; malonyl-CoA biosynthesis; malonyl-CoA from acetyl-CoA: step 1/1. Its function is as follows. Component of the acetyl coenzyme A carboxylase (ACC) complex. First, biotin carboxylase catalyzes the carboxylation of biotin on its carrier protein (BCCP) and then the CO(2) group is transferred by the carboxyltransferase to acetyl-CoA to form malonyl-CoA. This chain is Acetyl-coenzyme A carboxylase carboxyl transferase subunit alpha, found in Picosynechococcus sp. (strain ATCC 27264 / PCC 7002 / PR-6) (Agmenellum quadruplicatum).